Consider the following 485-residue polypeptide: Glutamyl-tRNA(Gln) amidotransferase subunit A (485 aa).

Catalysis depends on charge relay system residues Lys-79 and Ser-154. The Acyl-ester intermediate role is filled by Ser-178.

This sequence belongs to the amidase family. GatA subfamily. Heterotrimer of A, B and C subunits.

It catalyses the reaction L-glutamyl-tRNA(Gln) + L-glutamine + ATP + H2O = L-glutaminyl-tRNA(Gln) + L-glutamate + ADP + phosphate + H(+). Functionally, allows the formation of correctly charged Gln-tRNA(Gln) through the transamidation of misacylated Glu-tRNA(Gln) in organisms which lack glutaminyl-tRNA synthetase. The reaction takes place in the presence of glutamine and ATP through an activated gamma-phospho-Glu-tRNA(Gln). This chain is Glutamyl-tRNA(Gln) amidotransferase subunit A, found in Clostridium botulinum (strain Okra / Type B1).